We begin with the raw amino-acid sequence, 330 residues long: Ketol-acid reductoisomerase (NADP(+)) (330 aa).

The KARI N-terminal Rossmann domain occupies 3-184; the sequence is LPVYYDKDID…GGGRMGVLET (182 aa). NADP(+)-binding positions include 26-29, serine 52, and serine 54; that span reads YGAQ. Residue histidine 109 is part of the active site. Residue glycine 135 participates in NADP(+) binding. Residues 185-329 enclose the KARI C-terminal knotted domain; that stretch reads SFKEECESDL…EILRAPFNHK (145 aa). 4 residues coordinate Mg(2+): aspartate 193, glutamate 197, glutamate 229, and glutamate 233. Serine 254 serves as a coordination point for substrate.

It belongs to the ketol-acid reductoisomerase family. Requires Mg(2+) as cofactor.

The enzyme catalyses (2R)-2,3-dihydroxy-3-methylbutanoate + NADP(+) = (2S)-2-acetolactate + NADPH + H(+). The catalysed reaction is (2R,3R)-2,3-dihydroxy-3-methylpentanoate + NADP(+) = (S)-2-ethyl-2-hydroxy-3-oxobutanoate + NADPH + H(+). It participates in amino-acid biosynthesis; L-isoleucine biosynthesis; L-isoleucine from 2-oxobutanoate: step 2/4. It functions in the pathway amino-acid biosynthesis; L-valine biosynthesis; L-valine from pyruvate: step 2/4. Functionally, involved in the biosynthesis of branched-chain amino acids (BCAA). Catalyzes an alkyl-migration followed by a ketol-acid reduction of (S)-2-acetolactate (S2AL) to yield (R)-2,3-dihydroxy-isovalerate. In the isomerase reaction, S2AL is rearranged via a Mg-dependent methyl migration to produce 3-hydroxy-3-methyl-2-ketobutyrate (HMKB). In the reductase reaction, this 2-ketoacid undergoes a metal-dependent reduction by NADPH to yield (R)-2,3-dihydroxy-isovalerate. The polypeptide is Ketol-acid reductoisomerase (NADP(+)) (Helicobacter pylori (strain ATCC 700392 / 26695) (Campylobacter pylori)).